A 420-amino-acid polypeptide reads, in one-letter code: L-glutamine:2-deoxy-scyllo-inosose aminotransferase (420 aa).

At lysine 201 the chain carries N6-(pyridoxal phosphate)lysine.

This sequence belongs to the DegT/DnrJ/EryC1 family. L-glutamine:2-deoxy-scyllo-inosose/scyllo-inosose aminotransferase subfamily. Requires pyridoxal 5'-phosphate as cofactor.

It carries out the reaction 2-deoxy-L-scyllo-inosose + L-glutamine = 2-deoxy-scyllo-inosamine + 2-oxoglutaramate. The catalysed reaction is 3-amino-2,3-dideoxy-scyllo-inosose + L-glutamine = 2-deoxystreptamine + 2-oxoglutaramate. It functions in the pathway metabolic intermediate biosynthesis; 2-deoxystreptamine biosynthesis; 2-deoxystreptamine from D-glucose 6-phosphate: step 2/4. It participates in antibiotic biosynthesis; gentamicin biosynthesis. Its function is as follows. Catalyzes the PLP-dependent transamination of 2-deoxy-scyllo-inosose (2-DOI) to form 2-deoxy-scyllo-inosamine (2-DOIA) using L-glutamine as the amino donor. Also catalyzes the transamination of 3-amino-2,3-dideoxy-scyllo-inosose (keto-2-DOIA) into 2-deoxystreptamine (2-DOS). This Micromonospora echinospora (Micromonospora purpurea) protein is L-glutamine:2-deoxy-scyllo-inosose aminotransferase (gntA).